Consider the following 117-residue polypeptide: Nuclear transition protein 2 (117 aa).

The tract at residues M1–K117 is disordered. A compositionally biased stretch (low complexity) spans S7–S26. Positions 12, 14, 16, 24, 32, 34, 38, and 41 each coordinate Zn(2+). Positions A44–P53 are enriched in low complexity. Basic residues-rich tracts occupy residues K60–H77 and S93–K117. A Nuclear localization signal motif is present at residues G90–V98. A Phosphoserine modification is found at S112.

The protein belongs to the nuclear transition protein 2 family.

The protein resides in the nucleus. It is found in the chromosome. Plays a key role in the replacement of histones to protamine in the elongating spermatids of mammals. In condensing spermatids, loaded onto the nucleosomes, where it promotes the recruitment and processing of protamines, which are responsible for histone eviction. The histone H2AB1-H2BC1/TH2B dimer is required for loading of TNP2 onto chromatin. The sequence is that of Nuclear transition protein 2 from Mus musculus (Mouse).